Here is a 604-residue protein sequence, read N- to C-terminus: Glutamine--fructose-6-phosphate aminotransferase [isomerizing] (604 aa).

Cys2 serves as the catalytic Nucleophile; for GATase activity. The Glutamine amidotransferase type-2 domain maps to 2-216; sequence CGIVGYVGFR…DGDVVRLTRE (215 aa). 2 SIS domains span residues 281-420 and 453-594; these read LALD…ARGA and VAEK…VDQP. Lys599 (for Fru-6P isomerization activity) is an active-site residue.

In terms of assembly, homodimer.

The protein resides in the cytoplasm. It carries out the reaction D-fructose 6-phosphate + L-glutamine = D-glucosamine 6-phosphate + L-glutamate. Functionally, catalyzes the first step in hexosamine metabolism, converting fructose-6P into glucosamine-6P using glutamine as a nitrogen source. This Thermus thermophilus (strain ATCC BAA-163 / DSM 7039 / HB27) protein is Glutamine--fructose-6-phosphate aminotransferase [isomerizing].